We begin with the raw amino-acid sequence, 374 residues long: Isopentenyl-diphosphate delta-isomerase (374 aa).

Position 13-14 (13-14 (RK)) interacts with substrate. FMN is bound by residues 71–73 (GMT), Ser104, and Asn132. 104–106 (SQR) is a substrate binding site. Gln171 contacts substrate. Glu172 serves as a coordination point for Mg(2+). FMN contacts are provided by residues Lys203, Thr233, 282–284 (GMR), and 303–304 (AL).

This sequence belongs to the IPP isomerase type 2 family. As to quaternary structure, homooctamer. Dimer of tetramers. FMN is required as a cofactor. It depends on NADPH as a cofactor. Requires Mg(2+) as cofactor.

It is found in the cytoplasm. It carries out the reaction isopentenyl diphosphate = dimethylallyl diphosphate. Its function is as follows. Involved in the biosynthesis of isoprenoids. Catalyzes the 1,3-allylic rearrangement of the homoallylic substrate isopentenyl (IPP) to its allylic isomer, dimethylallyl diphosphate (DMAPP). In Thermococcus onnurineus (strain NA1), this protein is Isopentenyl-diphosphate delta-isomerase.